Reading from the N-terminus, the 265-residue chain is Cell division protein FtsQ (265 aa).

The span at 1–13 (MAGATTAKGGARR) shows a compositional bias: low complexity. Positions 1 to 25 (MAGATTAKGGARRTPPPGPPPPALK) are disordered. Over 1–35 (MAGATTAKGGARRTPPPGPPPPALKARRRLRLPRR) the chain is Cytoplasmic. The segment covering 14–23 (TPPPGPPPPA) has biased composition (pro residues). The helical transmembrane segment at 36 to 58 (RTLLVTGVATALLGSGVTWLLYG) threads the bilayer. Over 59-265 (SSWLRVEQVA…APTAPAVTHS (207 aa)) the chain is Extracellular. One can recognise a POTRA domain in the interval 62–131 (LRVEQVAVSG…DTIAVRVTER (70 aa)).

This sequence belongs to the FtsQ/DivIB family. FtsQ subfamily.

Its subcellular location is the cell membrane. Its function is as follows. Essential cell division protein. In Streptomyces bingchenggensis (strain BCW-1), this protein is Cell division protein FtsQ.